The following is a 631-amino-acid chain: Probable basic-leucine zipper transcription factor F (631 aa).

The stretch at 35–62 (KKNANVFNNFQQQQQQIQQQNKQSNGLI) forms a coiled coil. 3 disordered regions span residues 46–117 (QQQQ…HNNI), 154–207 (LNNS…NNQF), and 264–406 (MLNV…ERHQ). Composition is skewed to low complexity over residues 155-206 (NNSY…NNNQ) and 271-360 (NNAN…GSNN). Residues 328-366 (NNNNNNSNNISTQINNLNNNINNQNNQLNGSNNGKKKEE) are a coiled coil. Residues 405-468 (HQKRQRRLVK…KLIREQLLYL (64 aa)) enclose the bZIP domain. The tract at residues 407-427 (KRQRRLVKNREAAQLFRQRQK) is basic motif. Positions 433–440 (LEKKVSDL) are leucine-zipper. Positions 546 to 631 (QGNLLGTPIP…PPQQSTPNQR (86 aa)) are disordered. 2 stretches are compositionally biased toward low complexity: residues 563-609 (SNSG…PNSS) and 618-631 (PQNT…PNQR).

Belongs to the bZIP family.

It is found in the nucleus. Probable transcriptional regulator. The protein is Probable basic-leucine zipper transcription factor F (bzpF) of Dictyostelium discoideum (Social amoeba).